Consider the following 209-residue polypeptide: Large ribosomal subunit protein uL3 (209 aa).

Residues His-126–Pro-148 are disordered.

It belongs to the universal ribosomal protein uL3 family. As to quaternary structure, part of the 50S ribosomal subunit. Forms a cluster with proteins L14 and L19.

Functionally, one of the primary rRNA binding proteins, it binds directly near the 3'-end of the 23S rRNA, where it nucleates assembly of the 50S subunit. The sequence is that of Large ribosomal subunit protein uL3 from Listeria innocua serovar 6a (strain ATCC BAA-680 / CLIP 11262).